Here is a 317-residue protein sequence, read N- to C-terminus: Putative 2-hydroxyacid dehydrogenase SERP1888 (317 aa).

Residues 155–156 (EI), 234–236 (AGR), and D260 each bind NAD(+). The active site involves R236. E265 is an active-site residue. The active-site Proton donor is H283. 283–286 (HIGN) contacts NAD(+).

Belongs to the D-isomer specific 2-hydroxyacid dehydrogenase family.

The polypeptide is Putative 2-hydroxyacid dehydrogenase SERP1888 (Staphylococcus epidermidis (strain ATCC 35984 / DSM 28319 / BCRC 17069 / CCUG 31568 / BM 3577 / RP62A)).